Here is a 333-residue protein sequence, read N- to C-terminus: tRNA(Ile)-lysidine synthase (333 aa).

33-38 (SGGADS) is a binding site for ATP.

It belongs to the tRNA(Ile)-lysidine synthase family.

It localises to the cytoplasm. The catalysed reaction is cytidine(34) in tRNA(Ile2) + L-lysine + ATP = lysidine(34) in tRNA(Ile2) + AMP + diphosphate + H(+). Ligates lysine onto the cytidine present at position 34 of the AUA codon-specific tRNA(Ile) that contains the anticodon CAU, in an ATP-dependent manner. Cytidine is converted to lysidine, thus changing the amino acid specificity of the tRNA from methionine to isoleucine. The sequence is that of tRNA(Ile)-lysidine synthase from Salinispora tropica (strain ATCC BAA-916 / DSM 44818 / JCM 13857 / NBRC 105044 / CNB-440).